The chain runs to 412 residues: Peptidyl-prolyl cis-trans isomerase FKBP8 (412 aa).

The disordered stretch occupies residues 1 to 68 (MASCAEPSEP…GQPPAEEAEQ (68 aa)). Residues 22–50 (EDFEVLDGVEDAEGEEEEEEEEEEEDDLS) show a composition bias toward acidic residues. The PPIase FKBP-type domain occupies 120-204 (GQVVTVHLQT…CLEVTLKTAV (85 aa)). Ca(2+)-binding residues include aspartate 149 and aspartate 151. A TPR 1 repeat occupies 221-254 (ANRKRECGNAHYQRADFVLAANSYDLAIKAITSS). Glycyl lysine isopeptide (Lys-Gly) (interchain with G-Cter in ubiquitin) cross-links involve residues lysine 249, lysine 271, lysine 273, and lysine 284. TPR repeat units follow at residues 272–305 (VKCL…QPDN) and 306–339 (IKAL…EPSN). The residue at position 296 (serine 296) is a Phosphoserine. Residues lysine 307, lysine 314, lysine 334, lysine 340, lysine 348, lysine 351, and lysine 352 each participate in a glycyl lysine isopeptide (Lys-Gly) (interchain with G-Cter in ubiquitin) cross-link. A helical membrane pass occupies residues 390 to 410 (WLFGATAVALGGVALSVVIAA).

In terms of assembly, homomultimers or heteromultimers (Potential). Forms heterodimer with calmodulin. When activated by calmodulin and calcium, interacts with the BH4 domain of BCL2 and weakly with BCL2L1/BCLX isoform Bcl-X(L). Does not bind and inhibit calcineurin. Interacts with ZFYVE27; may negatively regulate ZFYVE27 phosphorylation. As to quaternary structure, (Microbial infection) Interacts with hepatitis C/HCV protein NS5A. The cofactor is Ca(2+). Post-translationally, ubiquitinated by PRKN during mitophagy, leading to its degradation and enhancement of mitophagy. Deubiquitinated by USP30. In terms of tissue distribution, widely expressed. Highest levels seen in the brain. Highly abundant in the retina.

The protein localises to the mitochondrion. It localises to the mitochondrion membrane. The catalysed reaction is [protein]-peptidylproline (omega=180) = [protein]-peptidylproline (omega=0). Functionally, constitutively inactive PPiase, which becomes active when bound to calmodulin and calcium. Seems to act as a chaperone for BCL2, targets it to the mitochondria and modulates its phosphorylation state. The BCL2/FKBP8/calmodulin/calcium complex probably interferes with the binding of BCL2 to its targets. The active form of FKBP8 may therefore play a role in the regulation of apoptosis. Involved in the inhibition of viral infection by influenza A viruses (IAV). The protein is Peptidyl-prolyl cis-trans isomerase FKBP8 (FKBP8) of Homo sapiens (Human).